Consider the following 76-residue polypeptide: ATP synthase subunit 9, mitochondrial (76 aa).

2 helical membrane passes run 14–34 and 52–72; these read IATL…VALI and ILGF…SFLL.

It belongs to the ATPase C chain family. As to quaternary structure, F-type ATPases have 2 components, CF(1) - the catalytic core - and CF(0) - the membrane proton channel. CF(1) has five subunits: alpha(3), beta(3), gamma(1), delta(1), epsilon(1). CF(0) has three main subunits: a, b and c.

It is found in the mitochondrion membrane. In terms of biological role, mitochondrial membrane ATP synthase (F(1)F(0) ATP synthase or Complex V) produces ATP from ADP in the presence of a proton gradient across the membrane which is generated by electron transport complexes of the respiratory chain. F-type ATPases consist of two structural domains, F(1) - containing the extramembraneous catalytic core and F(0) - containing the membrane proton channel, linked together by a central stalk and a peripheral stalk. During catalysis, ATP synthesis in the catalytic domain of F(1) is coupled via a rotary mechanism of the central stalk subunits to proton translocation. Part of the complex F(0) domain. A homomeric c-ring of probably 10 subunits is part of the complex rotary element. In Candida albicans (strain SC5314 / ATCC MYA-2876) (Yeast), this protein is ATP synthase subunit 9, mitochondrial (ATP9).